The following is a 624-amino-acid chain: Ceramide transfer protein (624 aa).

The segment covering 1-11 (MSDNQSWNSSG) has biased composition (polar residues). The segment at 1-24 (MSDNQSWNSSGSEEDPETESGPPV) is disordered. The PH domain maps to 23 to 117 (PVERCGVLSK…WVDAIEQHKT (95 aa)). A phosphoserine mark is found at Ser126, Ser132, and Ser135. The disordered stretch occupies residues 202-221 (DDEDDFPTTRSDGDFLHNTN). Residues 263-303 (IELMVKREESWQKRHDREVEKRRRVEEAYKNVMEELKKKPR) are a coiled coil. The residue at position 315 (Ser315) is a Phosphoserine. Residues 321-327 (EFFDAVE) carry the FFAT motif. Tyr372 carries the post-translational modification Phosphotyrosine. Phosphoserine is present on residues Ser373, Ser377, and Ser380. In terms of domain architecture, START spans 389–618 (DVHRFSSQVE…FTSYVQEKTA (230 aa)). 4 residues coordinate an N-acylsphing-4-enine: Glu472, Gln493, Asn530, and Tyr579.

In terms of assembly, interacts with VAPA and VAPB. Interaction with VAPB is less efficient than with VAPA. Interacts (via FFAT motif) with MOSPD2 (via MSP domain). Phosphorylation on Ser-132 decreases the affinity toward phosphatidylinositol 4-phosphate at Golgi membranes and reduces ceramide transfer activity. Inactivated by hyperphosphorylation of serine residues by CSNK1G2/CK1 that triggers dissociation from the Golgi complex, thus down-regulating ER-to-Golgi transport of ceramide and sphingomyelin synthesis.

It is found in the cytoplasm. It localises to the golgi apparatus. Its subcellular location is the endoplasmic reticulum. It carries out the reaction N-hexadecanoylsphing-4-enine(in) = N-hexadecanoylsphing-4-enine(out). Its function is as follows. Shelters ceramides and diacylglycerol lipids inside its START domain and mediates the intracellular trafficking of ceramides and diacylglycerol lipids in a non-vesicular manner. This chain is Ceramide transfer protein (Cert1), found in Mus musculus (Mouse).